A 347-amino-acid chain; its full sequence is Adenine deaminase (347 aa).

Residues His16, His18, and His204 each contribute to the Zn(2+) site. Glu207 functions as the Proton donor in the catalytic mechanism. A Zn(2+)-binding site is contributed by Asp285. Position 286 (Asp286) interacts with substrate.

The protein belongs to the metallo-dependent hydrolases superfamily. Adenosine and AMP deaminases family. Adenine deaminase type 2 subfamily. Zn(2+) is required as a cofactor.

It localises to the cytoplasm. Its subcellular location is the nucleus. It carries out the reaction adenine + H2O + H(+) = hypoxanthine + NH4(+). In terms of biological role, catalyzes the hydrolytic deamination of adenine to hypoxanthine. Plays an important role in the purine salvage pathway and in nitrogen catabolism. The protein is Adenine deaminase of Candida glabrata (strain ATCC 2001 / BCRC 20586 / JCM 3761 / NBRC 0622 / NRRL Y-65 / CBS 138) (Yeast).